The following is an 89-amino-acid chain: Small ribosomal subunit protein uS15 (89 aa).

The protein belongs to the universal ribosomal protein uS15 family. In terms of assembly, part of the 30S ribosomal subunit. Forms a bridge to the 50S subunit in the 70S ribosome, contacting the 23S rRNA.

Its function is as follows. One of the primary rRNA binding proteins, it binds directly to 16S rRNA where it helps nucleate assembly of the platform of the 30S subunit by binding and bridging several RNA helices of the 16S rRNA. Forms an intersubunit bridge (bridge B4) with the 23S rRNA of the 50S subunit in the ribosome. This is Small ribosomal subunit protein uS15 from Nostoc punctiforme (strain ATCC 29133 / PCC 73102).